Reading from the N-terminus, the 268-residue chain is Glutamate racemase (268 aa).

Substrate is bound by residues 10–11 (DS) and 42–43 (YG). Cys-73 functions as the Proton donor/acceptor in the catalytic mechanism. A substrate-binding site is contributed by 74-75 (NT). Residue Cys-184 is the Proton donor/acceptor of the active site. Residue 185–186 (TH) participates in substrate binding.

It belongs to the aspartate/glutamate racemases family.

It catalyses the reaction L-glutamate = D-glutamate. It participates in cell wall biogenesis; peptidoglycan biosynthesis. Functionally, provides the (R)-glutamate required for cell wall biosynthesis. This Limosilactobacillus fermentum (strain NBRC 3956 / LMG 18251) (Lactobacillus fermentum) protein is Glutamate racemase.